The sequence spans 635 residues: Chaperone protein HtpG (635 aa).

The segment at Met-1–Arg-346 is a; substrate-binding. The b stretch occupies residues Glu-347–Arg-563. A c region spans residues Met-564 to Ala-635.

This sequence belongs to the heat shock protein 90 family. As to quaternary structure, homodimer.

It is found in the cytoplasm. Molecular chaperone. Has ATPase activity. The protein is Chaperone protein HtpG of Bordetella pertussis (strain Tohama I / ATCC BAA-589 / NCTC 13251).